The primary structure comprises 263 residues: MEINTKLLISVTCISFFTFQLLFYFVSYWFSAKVSPGFNSLSFKKKIEWNSRVVSTCHSLVVGIFGLYIFLFDEATKADPLWGGPSLANVNIAIASGYLISDLSIIILYWKVIGDKFFIMHHCASLYAYYLVLKNGVLAYIGNFRLLAELSSPFVNQRWFFEALKYPKFSKAIVINGILMTVVFFIVRIASMLPHYGFMYSVYGTEPYIRLGVLIQLSWVISCVVLDVMNVMWMIKISKGCIKVISHIRQEKAKNSLQNGKLD.

4 helical membrane passes run 7–27 (LLISVTCISFFTFQLLFYFVS), 53–73 (VVSTCHSLVVGIFGLYIFLFD), 90–110 (VNIAIASGYLISDLSIIILYW), and 124–144 (ASLYAYYLVLKNGVLAYIGNF). Positions 44 to 246 (KKKIEWNSRV…ISKGCIKVIS (203 aa)) constitute a TLC domain. Lys-165 bears the N6-acetyllysine mark. The next 2 helical transmembrane spans lie at 173–193 (IVINGILMTVVFFIVRIASML) and 211–231 (LGVLIQLSWVISCVVLDVMNV).

This sequence belongs to the TLCD4 family.

It localises to the membrane. This Homo sapiens (Human) protein is TLC domain-containing protein 4.